The chain runs to 952 residues: Inner tegument protein (952 aa).

The interaction with large tegument protein stretch occupies residues W490–N952.

This sequence belongs to the herpesviridae inner tegument protein family. In terms of assembly, interacts (via C-terminus) with the large tegument protein/LTP (via N-terminus).

The protein localises to the virion tegument. It is found in the host cytoplasm. Its subcellular location is the host nucleus. The protein resides in the host Golgi apparatus. It localises to the host trans-Golgi network. Functionally, plays an essential role in cytoplasmic secondary envelopment during viral egress. Interacts with the capsid via the large tegument protein/LTP and participates in its transport to the host trans-Golgi network (TGN) where secondary envelopment occurs. Modulates tegumentation and capsid accumulation at the viral assembly complex. The protein is Inner tegument protein (63) of Connochaetes taurinus (Blue wildebeest).